The following is a 193-amino-acid chain: NADH-quinone oxidoreductase subunit B (193 aa).

C72, C73, C137, and C167 together coordinate [4Fe-4S] cluster.

The protein belongs to the complex I 20 kDa subunit family. As to quaternary structure, NDH-1 is composed of 14 different subunits. Subunits NuoB, C, D, E, F, and G constitute the peripheral sector of the complex. [4Fe-4S] cluster serves as cofactor.

Its subcellular location is the cell inner membrane. It carries out the reaction a quinone + NADH + 5 H(+)(in) = a quinol + NAD(+) + 4 H(+)(out). In terms of biological role, NDH-1 shuttles electrons from NADH, via FMN and iron-sulfur (Fe-S) centers, to quinones in the respiratory chain. Couples the redox reaction to proton translocation (for every two electrons transferred, four hydrogen ions are translocated across the cytoplasmic membrane), and thus conserves the redox energy in a proton gradient. This Brucella anthropi (strain ATCC 49188 / DSM 6882 / CCUG 24695 / JCM 21032 / LMG 3331 / NBRC 15819 / NCTC 12168 / Alc 37) (Ochrobactrum anthropi) protein is NADH-quinone oxidoreductase subunit B.